The chain runs to 236 residues: MDAVLYSVPLSFTPLRASSSPSSPYLLLPRFLSVQPCHKFTFSRSFPSKSRIPSASSAAGSTLMTNSSSPRSGVYTVGEFMTKKEDLHVVKPTTTVDEALELLVENRITGFPVIDEDWKLVGLVSDYDLLALDSISGSGRTENSMFPEVDSTWKTFNAVQKLLSKTNGKLVGDLMTPAPLVVEEKTNLEDAAKILLETKYRRLPVVDSDGKLVGIITRGNVVRAALQIKRSGDRNA.

The transit peptide at 1-53 directs the protein to the chloroplast; sequence MDAVLYSVPLSFTPLRASSSPSSPYLLLPRFLSVQPCHKFTFSRSFPSKSRIP. Residues 47–66 form a disordered region; that stretch reads PSKSRIPSASSAAGSTLMTN. S54 bears the N-acetylserine mark. CBS domains lie at 81–142 and 175–231; these read MTKK…GRTE and MTPA…IKRS.

The protein resides in the plastid. It localises to the chloroplast. The sequence is that of CBS domain-containing protein CBSX1, chloroplastic (CBSX1) from Arabidopsis thaliana (Mouse-ear cress).